Reading from the N-terminus, the 89-residue chain is Small ribosomal subunit protein uS15 (89 aa).

Positions 1 to 10 (MSITAERKAE) are enriched in basic and acidic residues. The interval 1 to 24 (MSITAERKAEVIQGNANKAGDTGS) is disordered.

Belongs to the universal ribosomal protein uS15 family. As to quaternary structure, part of the 30S ribosomal subunit. Forms a bridge to the 50S subunit in the 70S ribosome, contacting the 23S rRNA.

One of the primary rRNA binding proteins, it binds directly to 16S rRNA where it helps nucleate assembly of the platform of the 30S subunit by binding and bridging several RNA helices of the 16S rRNA. Functionally, forms an intersubunit bridge (bridge B4) with the 23S rRNA of the 50S subunit in the ribosome. The sequence is that of Small ribosomal subunit protein uS15 from Rhodopseudomonas palustris (strain BisB5).